The sequence spans 296 residues: Calponin-2 (296 aa).

S2 is modified (N-acetylserine). Residues K8 and K25 each carry the N6-acetyllysine modification. Residues 28-132 (PQKEAELRSW…SLLALAGKAK (105 aa)) form the Calponin-homology (CH) domain. S138 is subject to Phosphoserine. Calponin-like repeat units follow at residues 166 to 191 (IGLQ…RHLY), 206 to 231 (ISLQ…RHIY), and 245 to 269 (MSLQ…RQIY). A disordered region spans residues 275–296 (PQGPAADGAPAAAGDCPGPGES).

Belongs to the calponin family. Smooth muscle, and tissues containing significant amounts of smooth muscle.

Thin filament-associated protein that is implicated in the regulation and modulation of smooth muscle contraction. It is capable of binding to actin, calmodulin and tropomyosin. The interaction of calponin with actin inhibits the actomyosin Mg-ATPase activity. The polypeptide is Calponin-2 (CNN2) (Sus scrofa (Pig)).